Reading from the N-terminus, the 291-residue chain is Formamidopyrimidine-DNA glycosylase (291 aa).

Pro-2 serves as the catalytic Schiff-base intermediate with DNA. Glu-3 serves as the catalytic Proton donor. The Proton donor; for beta-elimination activity role is filled by Lys-61. DNA is bound by residues His-103, Arg-123, and Arg-165. Residues Glu-251–Pro-285 form an FPG-type zinc finger. Residue Arg-275 is the Proton donor; for delta-elimination activity of the active site.

The protein belongs to the FPG family. In terms of assembly, monomer. Zn(2+) is required as a cofactor.

The catalysed reaction is Hydrolysis of DNA containing ring-opened 7-methylguanine residues, releasing 2,6-diamino-4-hydroxy-5-(N-methyl)formamidopyrimidine.. It catalyses the reaction 2'-deoxyribonucleotide-(2'-deoxyribose 5'-phosphate)-2'-deoxyribonucleotide-DNA = a 3'-end 2'-deoxyribonucleotide-(2,3-dehydro-2,3-deoxyribose 5'-phosphate)-DNA + a 5'-end 5'-phospho-2'-deoxyribonucleoside-DNA + H(+). Involved in base excision repair of DNA damaged by oxidation or by mutagenic agents. Acts as a DNA glycosylase that recognizes and removes damaged bases. Has a preference for oxidized purines, such as 7,8-dihydro-8-oxoguanine (8-oxoG). Has AP (apurinic/apyrimidinic) lyase activity and introduces nicks in the DNA strand. Cleaves the DNA backbone by beta-delta elimination to generate a single-strand break at the site of the removed base with both 3'- and 5'-phosphates. This chain is Formamidopyrimidine-DNA glycosylase, found in Parafrankia sp. (strain EAN1pec).